We begin with the raw amino-acid sequence, 505 residues long: MALIEAFLLQGSPTGTILGALLLFLVIYLFSSSSSSQDKEKYPPGPKPLPLLGNLHILDLKKTYLSLLELSKKYGPIYTVYLGPKKVVILSGYKIVKEALVNLSEEFGDRDISPIFHDFNRGYGIAFSNGENWREMRRFALSTLRDFGMGRKRSEELIIEEIKYVKEEFEKFGGNPFETKLPLALAISNIIASIVFSVRFEYSNTKLHRMVGRAYENMKLTGSPSVQIYNMFPWLRPIVANRNQIVKNLRDTFKQNEELINGVMKTLDPFNPRGIVDSFLIRQQKDEESGKTDSLYNSNNLYCTVNNLFGAGTDTTVTTLRWGLLLMAKYPEIQAKVQDEIERVIGGRQPVVEDRKNLPYTDAVIHEIQRFADISPIGAPRQTTCDVHLNGYFIKKGTPVFPLLVSVLRDENEWETPDSFNPKHFLNKQGQFVKKDAFMPFGAGRRVCIGESLARMELFLFFTSLLQYFRFTPPPGVSEDDLDLTPVVGFTLNPKPHQLCAVKRS.

The helical transmembrane segment at 7–27 (FLLQGSPTGTILGALLLFLVI) threads the bilayer. Cys-448 contributes to the heme binding site.

The protein belongs to the cytochrome P450 family. It depends on heme as a cofactor. As to expression, detected in liver and ovary.

Its subcellular location is the endoplasmic reticulum membrane. It localises to the microsome membrane. In terms of biological role, metabolizes aflatoxin B1 (AFB1) to the cytotoxic derivative AFB1 exo-8,9-epoxide. Does not show activity towards lauric acid. The chain is Cytochrome P450 2K6 from Danio rerio (Zebrafish).